The sequence spans 333 residues: Probable tRNA pseudouridine synthase B (333 aa).

The active-site Nucleophile is Asp66. One can recognise a PUA domain in the interval 233–308 (LKKIIIKDSA…EVVEITRVIM (76 aa)).

This sequence belongs to the pseudouridine synthase TruB family. Type 2 subfamily.

The catalysed reaction is uridine(55) in tRNA = pseudouridine(55) in tRNA. Its function is as follows. Could be responsible for synthesis of pseudouridine from uracil-55 in the psi GC loop of transfer RNAs. In Methanococcus maripaludis (strain DSM 14266 / JCM 13030 / NBRC 101832 / S2 / LL), this protein is Probable tRNA pseudouridine synthase B.